The following is a 171-amino-acid chain: T-cell surface glycoprotein CD3 delta chain (171 aa).

A signal peptide spans 1 to 21 (MEHSRFLSGLILAAFLSRVSP). The Extracellular segment spans residues 22–104 (YEVEMEELED…NCVELDSATL (83 aa)). Cys-37 and Cys-72 are oxidised to a cystine. Asn-38 is a glycosylation site (N-linked (GlcNAc...) asparagine). The chain crosses the membrane as a helical span at residues 105–125 (AGIIVTDIIATLLLALGVYCF). Over 126 to 171 (AGHEMGRFSRAADTQDLLRNDQLYQPLRDRNDGQYSRLGENWARNK) the chain is Cytoplasmic. The ITAM domain occupies 138 to 166 (DTQDLLRNDQLYQPLRDRNDGQYSRLGEN). Tyr-149 and Tyr-160 each carry phosphotyrosine.

As to quaternary structure, the TCR-CD3 complex is composed of a CD3D/CD3E and a CD3G/CD3E heterodimers that preferentially associate with TCRalpha and TCRbeta, respectively, to form TCRalpha/CD3E/CD3G and TCRbeta/CD3G/CD3E trimers. In turn, the hexamer interacts with CD3Z homodimer to form the TCR-CD3 complex. Alternatively, TCRalpha and TCRbeta can be replaced by TCRgamma and TCRdelta. Interacts with coreceptors CD4 and CD8. Phosphorylated on Tyr residues after T-cell receptor triggering by LCK in association with CD4/CD8. In terms of tissue distribution, CD3D is mostly present on T-lymphocytes with its TCR-CD3 partners. Present also in fetal NK-cells.

The protein localises to the cell membrane. Functionally, part of the TCR-CD3 complex present on T-lymphocyte cell surface that plays an essential role in adaptive immune response. When antigen presenting cells (APCs) activate T-cell receptor (TCR), TCR-mediated signals are transmitted across the cell membrane by the CD3 chains CD3D, CD3E, CD3G and CD3Z. All CD3 chains contain immunoreceptor tyrosine-based activation motifs (ITAMs) in their cytoplasmic domain. Upon TCR engagement, these motifs become phosphorylated by Src family protein tyrosine kinases LCK and FYN, resulting in the activation of downstream signaling pathways. In addition of this role of signal transduction in T-cell activation, CD3D plays an essential role in thymocyte differentiation. Indeed, participates in correct intracellular TCR-CD3 complex assembly and surface expression. In absence of a functional TCR-CD3 complex, thymocytes are unable to differentiate properly. Interacts with CD4 and CD8 and thus serves to establish a functional link between the TCR and coreceptors CD4 and CD8, which is needed for activation and positive selection of CD4 or CD8 T-cells. The protein is T-cell surface glycoprotein CD3 delta chain (CD3D) of Sus scrofa (Pig).